The primary structure comprises 73 residues: Small ribosomal subunit protein bS18B (73 aa).

Belongs to the bacterial ribosomal protein bS18 family. As to quaternary structure, part of the 30S ribosomal subunit. Forms a tight heterodimer with protein bS6.

In terms of biological role, binds as a heterodimer with protein bS6 to the central domain of the 16S rRNA, where it helps stabilize the platform of the 30S subunit. The protein is Small ribosomal subunit protein bS18B of Frankia alni (strain DSM 45986 / CECT 9034 / ACN14a).